We begin with the raw amino-acid sequence, 149 residues long: 3-hydroxyacyl-[acyl-carrier-protein] dehydratase FabZ (149 aa).

Residue H50 is part of the active site.

The protein belongs to the thioester dehydratase family. FabZ subfamily.

It localises to the cytoplasm. The enzyme catalyses a (3R)-hydroxyacyl-[ACP] = a (2E)-enoyl-[ACP] + H2O. Functionally, involved in unsaturated fatty acids biosynthesis. Catalyzes the dehydration of short chain beta-hydroxyacyl-ACPs and long chain saturated and unsaturated beta-hydroxyacyl-ACPs. The chain is 3-hydroxyacyl-[acyl-carrier-protein] dehydratase FabZ from Pediococcus pentosaceus (strain ATCC 25745 / CCUG 21536 / LMG 10740 / 183-1w).